A 341-amino-acid chain; its full sequence is APSMTTPEPASKRRVVLGEISNNSSAVSGNEDLLCREFEVPKCVAQKKRKRGVKEDVGVDFGEKFDDPQMCSAYVSDVYEYLKQMEMETKRRPMMNYIEQVQKDVTSNMRGVLVDWLVEVSLEYKLLPETLYLAISYVDRYLSVNVLNRQKLQLLGVSSFLIASKYEEIKPKNVADFVDITDNTYSQQEVVKMEADLLKTLKFEMGSPTVKTFLGFIRAVQENPDVPKLKFEFLANYLAELSLLDYGCLEFVPSLIAASVTFLARFTIRPNVNPWSIALQKCSGYKSKDLKECVLLLHDLQMGRRGGSLSAVRDKYKKHKFKCVSTLSPAPEIPESIFNDV.

It belongs to the cyclin family. Cyclin AB subfamily.

Functionally, essential for the control of the cell cycle at the G2/M (mitosis) transition. Interacts with the CDC2 and CDK2 protein kinases to form MPF. G2/M cyclins accumulate steadily during G2 and are abruptly destroyed at mitosis. The chain is G2/mitotic-specific cyclin C13-1 from Daucus carota (Wild carrot).